A 114-amino-acid chain; its full sequence is Large ribosomal subunit protein uL24 (114 aa).

It belongs to the universal ribosomal protein uL24 family. Part of the 50S ribosomal subunit.

In terms of biological role, one of two assembly initiator proteins, it binds directly to the 5'-end of the 23S rRNA, where it nucleates assembly of the 50S subunit. One of the proteins that surrounds the polypeptide exit tunnel on the outside of the subunit. In Thermomicrobium roseum (strain ATCC 27502 / DSM 5159 / P-2), this protein is Large ribosomal subunit protein uL24.